A 103-amino-acid chain; its full sequence is Large ribosomal subunit protein uL24 (103 aa).

It belongs to the universal ribosomal protein uL24 family. As to quaternary structure, part of the 50S ribosomal subunit.

In terms of biological role, one of two assembly initiator proteins, it binds directly to the 5'-end of the 23S rRNA, where it nucleates assembly of the 50S subunit. Its function is as follows. One of the proteins that surrounds the polypeptide exit tunnel on the outside of the subunit. This is Large ribosomal subunit protein uL24 from Pediococcus pentosaceus (strain ATCC 25745 / CCUG 21536 / LMG 10740 / 183-1w).